Consider the following 834-residue polypeptide: ATP-dependent RNA helicase ddx23 (834 aa).

Disordered regions lie at residues 1 to 245 and 322 to 371; these read MDPP…TQFS and FGGY…GKQI. A compositionally biased stretch (basic and acidic residues) spans 10–25; that stretch reads SKRDTKKKDEVNKEQP. The segment covering 42–54 has biased composition (polar residues); that stretch reads SNPTQEEPTNTLQ. 4 stretches are compositionally biased toward basic and acidic residues: residues 70-110, 117-164, 171-205, and 231-245; these read GLKE…DYRD, GRDR…RRDG, RRRD…RDND, and DIHK…TQFS. Low complexity predominate over residues 328–362; that stretch reads NNNNNGNHYNGNIYNNNNNNNNNNNNNNNINNNNN. The short motif at 413–441 is the Q motif element; it reads RTWQESNLPREILEAIRQLGYEKPSPIQM. The Helicase ATP-binding domain occupies 444-643; it reads IPISLTGRDI…KKYLRRPCTI (200 aa). 457 to 464 lines the ATP pocket; that stretch reads AETGSGKT. The DEAD box signature appears at 570–573; that stretch reads DEAD. The Helicase C-terminal domain occupies 654 to 815; it reads RIRQTVIFVK…IVPIELLKHP (162 aa). Residues 813–834 are disordered; it reads KHPSSQQKHGSSKDHNKSVIFK. The span at 823 to 834 shows a compositional bias: basic and acidic residues; sequence SSKDHNKSVIFK.

This sequence belongs to the DEAD box helicase family. DDX23/PRP28 subfamily.

The protein resides in the cytoplasm. It localises to the nucleus. It catalyses the reaction ATP + H2O = ADP + phosphate + H(+). In terms of biological role, probable ATP-dependent RNA helicase which may be involved in mRNA splicing. This chain is ATP-dependent RNA helicase ddx23 (helB2), found in Dictyostelium discoideum (Social amoeba).